The following is a 90-amino-acid chain: MTSHSAVRIAIFAVIALHSIFECLSKPQILQRTDKSTDSEWDPQTCPETCIPSKNITCSDGCVCVKLGEEEEGTCFNMTGVDWLGSPSDD.

The signal sequence occupies residues 1 to 25 (MTSHSAVRIAIFAVIALHSIFECLS). 3 disulfides stabilise this stretch: C46-C62, C50-C64, and C58-C75. Residue N55 is glycosylated (N-linked (GlcNAc...) asparagine). N77 is a glycosylation site (N-linked (GlcNAc...) asparagine).

It localises to the secreted. Its function is as follows. Salivary chemokine-binding protein which binds to host chemokines CXCL1, CXCL2, CXCL3, CXCL4, CXCL5, CXCL6, CXCL7, CXCL10 and CXCL11. This chain is Evasin P1126, found in Amblyomma cajennense (Cayenne tick).